Here is a 341-residue protein sequence, read N- to C-terminus: Putative amino-acid ABC transporter-binding protein YhdW (341 aa).

An N-terminal signal peptide occupies residues 1-19 (MKKMMIATLAAASVLLAVA).

Belongs to the bacterial solute-binding protein 3 family.

Its subcellular location is the periplasm. Its function is as follows. Probably part of the binding-protein-dependent transport system YdhWXYZ for an amino acid. This chain is Putative amino-acid ABC transporter-binding protein YhdW (yhdW), found in Escherichia coli O157:H7.